Here is a 598-residue protein sequence, read N- to C-terminus: Probable translation initiation factor IF-2 (598 aa).

A tr-type G domain is found at 3–225; that stretch reads LRCPIVSVLG…GLAQRFLEQK (223 aa). The tract at residues 12-19 is G1; that stretch reads GHVDHGKT. 12–19 is a GTP binding site; it reads GHVDHGKT. The segment at 37 to 41 is G2; that stretch reads GITQH. The interval 76 to 79 is G3; sequence DTPG. Residues 76–80 and 130–133 contribute to the GTP site; these read DTPGH and NKVD. Residues 130 to 133 form a G4 region; it reads NKVD. Residues 200–202 form a G5 region; the sequence is SAM.

The protein belongs to the TRAFAC class translation factor GTPase superfamily. Classic translation factor GTPase family. IF-2 subfamily.

Function in general translation initiation by promoting the binding of the formylmethionine-tRNA to ribosomes. Seems to function along with eIF-2. The protein is Probable translation initiation factor IF-2 of Methanococcus maripaludis (strain DSM 14266 / JCM 13030 / NBRC 101832 / S2 / LL).